A 120-amino-acid chain; its full sequence is Large ribosomal subunit protein uL18 (120 aa).

Belongs to the universal ribosomal protein uL18 family. As to quaternary structure, part of the 50S ribosomal subunit; part of the 5S rRNA/L5/L18/L25 subcomplex. Contacts the 5S and 23S rRNAs.

In terms of biological role, this is one of the proteins that bind and probably mediate the attachment of the 5S RNA into the large ribosomal subunit, where it forms part of the central protuberance. The chain is Large ribosomal subunit protein uL18 from Brucella anthropi (strain ATCC 49188 / DSM 6882 / CCUG 24695 / JCM 21032 / LMG 3331 / NBRC 15819 / NCTC 12168 / Alc 37) (Ochrobactrum anthropi).